Here is a 621-residue protein sequence, read N- to C-terminus: tRNA 5-methylaminomethyl-2-thiouridine biosynthesis bifunctional protein MnmC (621 aa).

Residues 1–222 form a tRNA (mnm(5)s(2)U34)-methyltransferase region; sequence MKNANLSFKG…KRQMSSAVLE (222 aa). The segment at 250 to 621 is FAD-dependent cmnm(5)s(2)U34 oxidoreductase; that stretch reads IGTGVAGLAT…LIRKLKKGLK (372 aa).

In the N-terminal section; belongs to the methyltransferase superfamily. tRNA (mnm(5)s(2)U34)-methyltransferase family. This sequence in the C-terminal section; belongs to the DAO family. FAD serves as cofactor.

It is found in the cytoplasm. The enzyme catalyses 5-aminomethyl-2-thiouridine(34) in tRNA + S-adenosyl-L-methionine = 5-methylaminomethyl-2-thiouridine(34) in tRNA + S-adenosyl-L-homocysteine + H(+). Its function is as follows. Catalyzes the last two steps in the biosynthesis of 5-methylaminomethyl-2-thiouridine (mnm(5)s(2)U) at the wobble position (U34) in tRNA. Catalyzes the FAD-dependent demodification of cmnm(5)s(2)U34 to nm(5)s(2)U34, followed by the transfer of a methyl group from S-adenosyl-L-methionine to nm(5)s(2)U34, to form mnm(5)s(2)U34. This chain is tRNA 5-methylaminomethyl-2-thiouridine biosynthesis bifunctional protein MnmC, found in Campylobacter concisus (strain 13826).